A 750-amino-acid chain; its full sequence is Serine/threonine-protein kinase GE16371 (750 aa).

Doublecortin domains follow at residues 159-245 and 315-398; these read LRIK…VEYN and RIVT…AEDF. The Protein kinase domain maps to 479–737; the sequence is YTLGKIIGDG…SEDILDHYWT (259 aa). Residues 485–493 and lysine 508 each bind ATP; that span reads IGDGNFAIV. Aspartate 600 acts as the Proton acceptor in catalysis.

The protein belongs to the protein kinase superfamily. CAMK Ser/Thr protein kinase family. CaMK subfamily.

The enzyme catalyses L-seryl-[protein] + ATP = O-phospho-L-seryl-[protein] + ADP + H(+). The catalysed reaction is L-threonyl-[protein] + ATP = O-phospho-L-threonyl-[protein] + ADP + H(+). This Drosophila yakuba (Fruit fly) protein is Serine/threonine-protein kinase GE16371.